A 361-amino-acid polypeptide reads, in one-letter code: Phosphate acyltransferase (361 aa).

It belongs to the PlsX family. As to quaternary structure, homodimer. Probably interacts with PlsY.

It localises to the cytoplasm. The enzyme catalyses a fatty acyl-[ACP] + phosphate = an acyl phosphate + holo-[ACP]. It functions in the pathway lipid metabolism; phospholipid metabolism. Its function is as follows. Catalyzes the reversible formation of acyl-phosphate (acyl-PO(4)) from acyl-[acyl-carrier-protein] (acyl-ACP). This enzyme utilizes acyl-ACP as fatty acyl donor, but not acyl-CoA. The polypeptide is Phosphate acyltransferase (Anaeromyxobacter dehalogenans (strain 2CP-C)).